A 64-amino-acid polypeptide reads, in one-letter code: Lectin-A (64 aa).

Chitin-binding type-1 domains follow at residues 1 to 20 and 22 to 45; these read APEC…QVVT and DFDD…NTDA.

Glycosylated.

Its function is as follows. N-acetyl-D-glucosamine binding lectin. Shows low hemagglutinating activity towards human erythrocytes. Has low mitogenic activity towards human peripheral blood lymphocytes. This Phytolacca americana (American pokeweed) protein is Lectin-A.